The chain runs to 715 residues: Fatty acid oxidation complex subunit alpha (715 aa).

The interval Met-1 to Ala-190 is enoyl-CoA hydratase/isomerase. Residue Asp-297 participates in substrate binding. The tract at residues His-312–Asn-715 is 3-hydroxyacyl-CoA dehydrogenase. NAD(+) is bound by residues Met-325, Asp-344, Val-401–Glu-403, Lys-408, and Ser-430. The For 3-hydroxyacyl-CoA dehydrogenase activity role is filled by His-451. Asn-454 lines the NAD(+) pocket. Substrate contacts are provided by Asn-501 and Tyr-660.

It in the N-terminal section; belongs to the enoyl-CoA hydratase/isomerase family. This sequence in the C-terminal section; belongs to the 3-hydroxyacyl-CoA dehydrogenase family. As to quaternary structure, heterotetramer of two alpha chains (FadB) and two beta chains (FadA).

The catalysed reaction is a (3S)-3-hydroxyacyl-CoA + NAD(+) = a 3-oxoacyl-CoA + NADH + H(+). It carries out the reaction a (3S)-3-hydroxyacyl-CoA = a (2E)-enoyl-CoA + H2O. It catalyses the reaction a 4-saturated-(3S)-3-hydroxyacyl-CoA = a (3E)-enoyl-CoA + H2O. The enzyme catalyses (3S)-3-hydroxybutanoyl-CoA = (3R)-3-hydroxybutanoyl-CoA. The catalysed reaction is a (3Z)-enoyl-CoA = a 4-saturated (2E)-enoyl-CoA. It carries out the reaction a (3E)-enoyl-CoA = a 4-saturated (2E)-enoyl-CoA. The protein operates within lipid metabolism; fatty acid beta-oxidation. In terms of biological role, involved in the aerobic and anaerobic degradation of long-chain fatty acids via beta-oxidation cycle. Catalyzes the formation of 3-oxoacyl-CoA from enoyl-CoA via L-3-hydroxyacyl-CoA. It can also use D-3-hydroxyacyl-CoA and cis-3-enoyl-CoA as substrate. This is Fatty acid oxidation complex subunit alpha from Pseudomonas putida (strain ATCC 47054 / DSM 6125 / CFBP 8728 / NCIMB 11950 / KT2440).